A 585-amino-acid chain; its full sequence is MTIIENISYTHLAIGLIAYNVIKPLYGLHVNRKKAIATGLPYVYTAVYEWSMVWLLVKEIAWPVLKALRLGWLVKYSRPSWNFDAKNKVHEDLGDIFCVVSPGGLSIFVGDPDVICEVTKKRTKFPRPVKSFVKVMGYFGPSILSSEHDEWRFHRRVTNKTFTEPNHKVVWFDSLYQASAMRDEWLSGLDNITSNKEGIIHKMGSDCMKLALHVVTLASFGVQIPWTAQKDAIPTGYEMSFREASEFFLEHIAIMAYCPKWLYKYGPKLAQTAGVAAKNMRRHMMELIQIEDEKLQNGEDGKNLLSAMLQSDDPEAQAKGGSAYDTASVSKTGVRKDFVMGNSAIFLLAGHETSARSLEYALFLFAMHPDVQEEIFEEIDEILEGVGNIYDLKYEEVFPKMVKTNGVLYEATRLFPVTPYIPKSTEDVVDSWFIYKDQRVDIPPESMVALNAIGVHYNERYWPEPYRFKPSRWYQTQKQEALGISPQDTLQLSGSNTDAARLYRRGTYLGFGEGPRNCPGKRFAQVEIMATFLALFREHRMELVLEPGETHRDAFDRAWAALQRSRMVITLNLFEQIKVKLVPRK.

Residue cysteine 518 coordinates heme.

This sequence belongs to the cytochrome P450 family. It depends on heme as a cofactor.

Its pathway is secondary metabolite biosynthesis; terpenoid biosynthesis. Cytochrome P450 monooxygenase; part of the gene cluster that mediates the biosynthesis of sesquiterpenyl epoxy-cyclohexenoids (SECs) such as anthrobotrisins and arthrosporols, metabolites that possess a novel hybrid carbon skeleton consisting of a polyketide-derived epoxycyclohexenol combined with a terpenoid-derived monocyclic sesquiterpenol substructure (PKS-PTS hybrid). The SEC pathway plays an important role for fungal soil colonization via decreasing fungal nematode-capturing ability. Within the pathway, the cytochrome P450 monooxygenase AOL_s00215g278 plays a role in the oxygenation of the phenol moiety, most likely in the epoxy formation. The pathway begins with the biosynthesis of 6-methylsalicylic acid (6-MSA), the first precursor of the polyketide-derived epoxycyclohexenol in arthrosporols, by the polyketide synthase (PKS) AOL_s00215g283 via condensation of 1 acetate and 3 malonate units. The 6-methylsalicylic acid decarboxylase AOL_s00215g281 then catalyzes the decarboxylation of 6-methylsalicylic acid to yield m-cresol. The cytochrome P450 monooxygenase AOL_s00215g282 further oxidizes m-cresol to yield toluquinol. With the assistance of the oxidoreductase AOL_s00215g277, the polyprenyl transferase AOL_s00215g276 catalyzes the farnesylation of toluquinol to produce farnesyl hydroquinone, the hybrid precursor for biosynthesis of SECs. Farnesyl hydroquinone undergoes epoxidation and then subsequent dehydrogenation to form farnesyl epoxy-quinone, the first and simplest SEC. The cytochrome P450 monooxygenase AOL_s00215g278 and the FAD-dependent monooxygenase AOL_s00215g279 might be involved in the oxygenation of the phenol moiety, most likely in the epoxy formation. The cytochrome P450 monooxygenases AOL_s00215g274 and AOL_s00215g280 are involved in specific regional ketone reductions at respectively C-4 and C-1 of farnesyl epoxy-quinone PubMed:33823587. This Arthrobotrys oligospora (strain ATCC 24927 / CBS 115.81 / DSM 1491) (Nematode-trapping fungus) protein is Cytochrome P450 monooxygenase AOL_s00215g278.